The sequence spans 94 residues: Cell division topological specificity factor (94 aa).

Belongs to the MinE family.

Prevents the cell division inhibition by proteins MinC and MinD at internal division sites while permitting inhibition at polar sites. This ensures cell division at the proper site by restricting the formation of a division septum at the midpoint of the long axis of the cell. The polypeptide is Cell division topological specificity factor (Acetivibrio thermocellus (strain ATCC 27405 / DSM 1237 / JCM 9322 / NBRC 103400 / NCIMB 10682 / NRRL B-4536 / VPI 7372) (Clostridium thermocellum)).